The chain runs to 270 residues: Cyclohexanol dehydrogenase (270 aa).

NAD(+) contacts are provided by Arg19, Asp40, Asp78, Val79, Asn105, Tyr176, Lys180, Ile209, and Thr211. Tyr176 serves as the catalytic Proton acceptor.

Belongs to the short-chain dehydrogenases/reductases (SDR) family. Homodimer.

It is found in the cytoplasm. It catalyses the reaction cyclohexanol + NAD(+) = cyclohexanone + NADH + H(+). Activity is enhanced by the addition of Ba(2+) and Mg(2+), but inhibited by the addition of Al(3+), Ca(2+), Co(2+), Cu(2+), Mn(2+) and Zn(2+). Functionally, catalyzes the oxidation of cyclohexanol to cyclohexanone. Can also use a broad range of other alcohols, including trans-cyclohexane-1,2-diol, trans-cyclopentane-1,2-diol, cyclopentanol, hexane-1,2-diol, ethanol, 1-propanol, 1-butanol, 1-pentanol and 1-hexanol. This chain is Cyclohexanol dehydrogenase, found in Rhodococcus sp. (strain TK6).